We begin with the raw amino-acid sequence, 292 residues long: NAD kinase (292 aa).

The Proton acceptor role is filled by aspartate 73. Residues 73-74 (DG), 147-148 (NE), histidine 158, arginine 175, aspartate 177, 188-193 (TAYSLS), and glutamine 247 contribute to the NAD(+) site.

The protein belongs to the NAD kinase family. The cofactor is a divalent metal cation.

It localises to the cytoplasm. The enzyme catalyses NAD(+) + ATP = ADP + NADP(+) + H(+). In terms of biological role, involved in the regulation of the intracellular balance of NAD and NADP, and is a key enzyme in the biosynthesis of NADP. Catalyzes specifically the phosphorylation on 2'-hydroxyl of the adenosine moiety of NAD to yield NADP. This chain is NAD kinase, found in Edwardsiella ictaluri (strain 93-146).